The chain runs to 108 residues: Circadian clock oscillator protein KaiB (108 aa).

Belongs to the KaiB family. As to quaternary structure, may undergo a major conformational rearrangment; in the free state forms homooligomers. When bound to KaiC switches to a monomeric thioredoxin-fold (KaiB(fs)). The active oscillator complex is probably KaiC(6):KaiB(6).

Functionally, component of the KaiBC clock protein complex, which constitutes the main circadian regulator in cyanobacteria; it may modify the ATPase activity of KaiC. In terms of biological role, may be a metamorphic protein which reversibly switches between an inactive tetrameric fold and a rare, thioredoxin-like monomeric fold (KaiB(fs)). KaiB(fs) binds phospho-KaiC, and perhaps clock output effectors. The chain is Circadian clock oscillator protein KaiB from Prochlorococcus marinus (strain MIT 9515).